The sequence spans 347 residues: uncharacterized protein (347 aa).

The N-terminal stretch at 1 to 21 is a signal peptide; sequence MNKKSLNIVVMFGILMILAFS.

The protein belongs to the bacterial solute-binding protein 1 family. WtpA subfamily.

This is an uncharacterized protein from Methanococcus maripaludis (strain C5 / ATCC BAA-1333).